The following is a 475-amino-acid chain: Ribonuclease Y (475 aa).

A disordered region spans residues 34 to 73 (EFERESRERRNELQRVERRLMQKEESLDKKSETLEQKDDR). A KH domain is found at 165–228 (TVTVVQLPND…EVARIALEKL (64 aa)). An HD domain is found at 291 to 384 (VLKHAIEVSH…VTAADAISAA (94 aa)).

The protein belongs to the RNase Y family.

Endoribonuclease that initiates mRNA decay. The polypeptide is Ribonuclease Y (Alkaliphilus metalliredigens (strain QYMF)).